Here is a 165-residue protein sequence, read N- to C-terminus: Crossover junction endodeoxyribonuclease RuvC (165 aa).

Residues Asp-7, Glu-67, and Asp-140 contribute to the active site. 3 residues coordinate Mg(2+): Asp-7, Glu-67, and Asp-140.

Belongs to the RuvC family. In terms of assembly, homodimer which binds Holliday junction (HJ) DNA. The HJ becomes 2-fold symmetrical on binding to RuvC with unstacked arms; it has a different conformation from HJ DNA in complex with RuvA. In the full resolvosome a probable DNA-RuvA(4)-RuvB(12)-RuvC(2) complex forms which resolves the HJ. Mg(2+) is required as a cofactor.

Its subcellular location is the cytoplasm. It carries out the reaction Endonucleolytic cleavage at a junction such as a reciprocal single-stranded crossover between two homologous DNA duplexes (Holliday junction).. Its function is as follows. The RuvA-RuvB-RuvC complex processes Holliday junction (HJ) DNA during genetic recombination and DNA repair. Endonuclease that resolves HJ intermediates. Cleaves cruciform DNA by making single-stranded nicks across the HJ at symmetrical positions within the homologous arms, yielding a 5'-phosphate and a 3'-hydroxyl group; requires a central core of homology in the junction. The consensus cleavage sequence is 5'-(A/T)TT(C/G)-3'. Cleavage occurs on the 3'-side of the TT dinucleotide at the point of strand exchange. HJ branch migration catalyzed by RuvA-RuvB allows RuvC to scan DNA until it finds its consensus sequence, where it cleaves and resolves the cruciform DNA. The chain is Crossover junction endodeoxyribonuclease RuvC from Caldanaerobacter subterraneus subsp. tengcongensis (strain DSM 15242 / JCM 11007 / NBRC 100824 / MB4) (Thermoanaerobacter tengcongensis).